The primary structure comprises 326 residues: Putative ribose-phosphate pyrophosphokinase 2 (326 aa).

ATP contacts are provided by residues 43–45 (DGE) and 102–103 (RQ). Histidine 136 contributes to the Mg(2+) binding site. D-ribose 5-phosphate-binding positions include aspartate 225 and 229 to 233 (NTGKT).

It belongs to the ribose-phosphate pyrophosphokinase family. Class I subfamily. In terms of assembly, homohexamer. The cofactor is Mg(2+).

It localises to the cytoplasm. The enzyme catalyses D-ribose 5-phosphate + ATP = 5-phospho-alpha-D-ribose 1-diphosphate + AMP + H(+). It functions in the pathway metabolic intermediate biosynthesis; 5-phospho-alpha-D-ribose 1-diphosphate biosynthesis; 5-phospho-alpha-D-ribose 1-diphosphate from D-ribose 5-phosphate (route I): step 1/1. Functionally, involved in the biosynthesis of the central metabolite phospho-alpha-D-ribosyl-1-pyrophosphate (PRPP) via the transfer of pyrophosphoryl group from ATP to 1-hydroxyl of ribose-5-phosphate (Rib-5-P). The chain is Putative ribose-phosphate pyrophosphokinase 2 from Streptococcus pyogenes serotype M3 (strain SSI-1).